Consider the following 438-residue polypeptide: Adenylosuccinate synthetase (438 aa).

Residues 13–19 and 41–43 each bind GTP; these read GDEGKGK and GHT. Asp-14 serves as the catalytic Proton acceptor. The Mg(2+) site is built by Asp-14 and Gly-41. IMP contacts are provided by residues 14–17, 39–42, Thr-136, Arg-150, Gln-231, Thr-246, and Arg-310; these read DEGK and NAGH. His-42 serves as the catalytic Proton donor. Residue 306–312 coordinates substrate; that stretch reads STTGRRR. Residues Arg-312, 338-340, and 421-423 contribute to the GTP site; these read KID and STG.

The protein belongs to the adenylosuccinate synthetase family. As to quaternary structure, homodimer. The cofactor is Mg(2+).

The protein localises to the cytoplasm. The enzyme catalyses IMP + L-aspartate + GTP = N(6)-(1,2-dicarboxyethyl)-AMP + GDP + phosphate + 2 H(+). The protein operates within purine metabolism; AMP biosynthesis via de novo pathway; AMP from IMP: step 1/2. Plays an important role in the de novo pathway of purine nucleotide biosynthesis. Catalyzes the first committed step in the biosynthesis of AMP from IMP. The sequence is that of Adenylosuccinate synthetase from Blochmanniella floridana.